Reading from the N-terminus, the 1257-residue chain is MATLNEVYPVNYNVLSSDAFQQLDTTGFKSKYDEMIKAFEKKWKKGAKGKDLLDVAWTYITTGEIDPLNVIKGVLSVLTLIPEVGTVASAASTIVSFIWPKIFGDKPNAKNIFEELKPQIEALIQQDITNYQDAINQKKFDSLQKTINLYTVAIDNNDYVTAKTQLENLNSILTSDISIFIPEGYETGGLPYYAMVANAHILLLRDAIVNAEKLGFSDKEVDTHKKYIKMTIHNHTEAVIKAFLNGLDKFKSLDVNSYNKKANYIKGMTEMVLDLVALWPTFDPDHYQKEVEIEFTRTISSPIYQPVPKNMQNTSSSIVPSDLFHYQGDLVKLEFSTRTDNDGLAKIFTGIRNTFYKSPNTHETYHVDFSYNTQSSGNISRGSSNPIPIDLNNPIISTCIRNSFYKAIAGSSVLVNFKDGTQGYAFAQAPTGGAWDHSFIESDGAPEGHKLNYIYTSPGDTLRDFINVYTLISTPTINELSTEKIKGFPAEKGYIKNQGIMKYYGKPEYINGAQPVNLENQQTLIFEFHASKTAQYTIRIRYASTQGTKGYFRLDNQELQTLNIPTSHNGYVTGNIGENYDLYTIGSYTITEGNHTLQIQHNDKNGMVLDRIEFVPKDSLQDSPQDSPPEVHESTIIFDKSSPTIWSSNKHSYSHIHLEGSYTSQGSYPHNLLINLFHPTDPNRNHTIHVNNGDMNVDYGKDSVADGLNFNKITATIPSDAWYSGTITSMHLFNDNNFKTITPKFELSNELENITTQVNALFASSAQDTLASNVSDYWIEQVVMKVDALSDEVFGKEKKALRKLVNQAKRLSKIRNLLIGGNFDNLVAWYMGKDVVKESDHELFKSDHVLLPPPTFHPSYIFQKVEESKLKPNTRYTISGFIAHGEDVELVVSRYGQEIQKVMQVPYEEALPLTSESNSSCCVPNLNINETLADPHFFSYSIDVGSLEMEANPGIEFGLRIVKPTGMARVSNLEIREDRPLTAKEIRQVQRAARDWKQNYEQERTEITAIIQPVLNQINALYENEDWNGSIRSNVSYHDLEQIMLPTLLKTEEINCNYDHPAFLLKVYHWFMTDRIGEHGTILARFQEALDRAYTQLESRNLLHNGHFTTDTANWTIEGDAHHTILEDGRRVLRLPDWSSNATQTIEIEDFDLDQEYQLLIHAKGKGSITLQHGEENEYVETHTHHTNDFITSQNIPFTFKGNQIEVHITSEDGEFLIDHITVIEVSKTDTNTNIIENSPINTSMNSNVRVDIPRSL.

Belongs to the delta endotoxin family.

Functionally, endotoxin with nematicidal activity. This chain is Pesticidal crystal protein Cry12Aa (cry12Aa), found in Bacillus thuringiensis.